A 223-amino-acid polypeptide reads, in one-letter code: Probable glutathione S-transferase (223 aa).

Residues 2–81 (AEVKLLGFWY…YIDETFEGPS (80 aa)) form the GST N-terminal domain. Glutathione is bound by residues Ser12, Lys39, Val53, and 65–66 (ES). Positions 86–212 (DPYDRALARF…ELLAFFRARF (127 aa)) constitute a GST C-terminal domain.

Belongs to the GST superfamily. HSP26 family. In terms of tissue distribution, root tip-specific expression.

It carries out the reaction RX + glutathione = an S-substituted glutathione + a halide anion + H(+). The chain is Probable glutathione S-transferase from Nicotiana tabacum (Common tobacco).